The sequence spans 500 residues: NAD(P)H-quinone oxidoreductase chain 4, chloroplastic (500 aa).

The next 14 membrane-spanning stretches (helical) occupy residues 4-24 (FPWL…IFFL), 37-57 (IFIC…HFQL), 87-107 (IGPI…AWPV), 113-130 (LFHF…GSFS), 134-154 (LLLF…LLSM), 167-187 (FILY…GIGL), 208-228 (ALEI…SPII), 242-262 (HYST…YGLV), 272-292 (AHSI…IYAA), 305-325 (IAYS…SITD), 330-350 (GAIL…FLAG), 386-406 (LALP…GIIT), 416-436 (ILIT…SLSM), and 462-482 (LFVL…PDFV).

The protein belongs to the complex I subunit 4 family.

The protein localises to the plastid. The protein resides in the chloroplast thylakoid membrane. It carries out the reaction a plastoquinone + NADH + (n+1) H(+)(in) = a plastoquinol + NAD(+) + n H(+)(out). The catalysed reaction is a plastoquinone + NADPH + (n+1) H(+)(in) = a plastoquinol + NADP(+) + n H(+)(out). The polypeptide is NAD(P)H-quinone oxidoreductase chain 4, chloroplastic (Vitis vinifera (Grape)).